Reading from the N-terminus, the 261-residue chain is Thiazole synthase (261 aa).

Lys102 (schiff-base intermediate with DXP) is an active-site residue. 1-deoxy-D-xylulose 5-phosphate-binding positions include Gly163, Ala189 to Gly190, and Asn211 to Thr212.

This sequence belongs to the ThiG family. As to quaternary structure, homotetramer. Forms heterodimers with either ThiH or ThiS.

It localises to the cytoplasm. It catalyses the reaction [ThiS sulfur-carrier protein]-C-terminal-Gly-aminoethanethioate + 2-iminoacetate + 1-deoxy-D-xylulose 5-phosphate = [ThiS sulfur-carrier protein]-C-terminal Gly-Gly + 2-[(2R,5Z)-2-carboxy-4-methylthiazol-5(2H)-ylidene]ethyl phosphate + 2 H2O + H(+). The protein operates within cofactor biosynthesis; thiamine diphosphate biosynthesis. Functionally, catalyzes the rearrangement of 1-deoxy-D-xylulose 5-phosphate (DXP) to produce the thiazole phosphate moiety of thiamine. Sulfur is provided by the thiocarboxylate moiety of the carrier protein ThiS. In vitro, sulfur can be provided by H(2)S. The sequence is that of Thiazole synthase from Myxococcus xanthus (strain DK1622).